Reading from the N-terminus, the 467-residue chain is Pancreatic lipase-related protein 3 (467 aa).

Positions 1–17 (MLGIWIVAFLFFGTSRG) are cleaved as a signal peptide. The cysteines at positions 21 and 27 are disulfide-linked. The N-linked (GlcNAc...) asparagine glycan is linked to asparagine 74. A disulfide bridge connects residues cysteine 107 and cysteine 118. The N-linked (GlcNAc...) asparagine glycan is linked to asparagine 125. Residue serine 168 is the Nucleophile of the active site. The Charge relay system role is filled by aspartate 191. A disulfide bridge connects residues cysteine 252 and cysteine 277. The active-site Charge relay system is the histidine 279. Disulfide bonds link cysteine 301/cysteine 312, cysteine 315/cysteine 320, and cysteine 451/cysteine 467. Positions 355 to 467 (WRHKLSVKLS…PNILQNLKPC (113 aa)) constitute a PLAT domain.

Belongs to the AB hydrolase superfamily. Lipase family. In terms of tissue distribution, overexpressed in hepatocellular carcinoma.

It localises to the secreted. It catalyses the reaction a triacylglycerol + H2O = a diacylglycerol + a fatty acid + H(+). The chain is Pancreatic lipase-related protein 3 (PNLIPRP3) from Homo sapiens (Human).